Here is a 218-residue protein sequence, read N- to C-terminus: uncharacterized protein (218 aa).

The disordered stretch occupies residues 1 to 67 (MARITNMGKR…KKKRSEYRRL (67 aa)). Over residues 29 to 39 (NSSNTNEESSS) the composition is skewed to low complexity. The segment covering 40–49 (QDNMKASFGS) has biased composition (polar residues). Residues 58-67 (KKKRSEYRRL) are compositionally biased toward basic residues. CCHC-type zinc fingers lie at residues 77-94 (KFCFACRQQGHIVQDCPE), 100-117 (SICFRCGSKEHSLNACSK), and 124-141 (AKCFICHENGHLSGQCEQ). The segment at 152 to 168 (CCKFCSSVHHLAKDCDQ) adopts a CCHC-type 4; atypical zinc-finger fold.

This is an uncharacterized protein from Schizosaccharomyces pombe (strain 972 / ATCC 24843) (Fission yeast).